A 405-amino-acid chain; its full sequence is Argininosuccinate synthase (405 aa).

ATP-binding positions include 10–18 (AYSGGLDTS) and Ala-37. Tyr-88 and Ser-93 together coordinate L-citrulline. ATP is bound at residue Gly-118. L-aspartate is bound by residues Thr-120, Asn-124, and Asp-125. Asn-124 contributes to the L-citrulline binding site. Residues Arg-128, Ser-177, Ser-186, Glu-263, and Tyr-275 each coordinate L-citrulline.

It belongs to the argininosuccinate synthase family. Type 1 subfamily. Homotetramer.

It localises to the cytoplasm. The catalysed reaction is L-citrulline + L-aspartate + ATP = 2-(N(omega)-L-arginino)succinate + AMP + diphosphate + H(+). The protein operates within amino-acid biosynthesis; L-arginine biosynthesis; L-arginine from L-ornithine and carbamoyl phosphate: step 2/3. The protein is Argininosuccinate synthase of Acetivibrio thermocellus (strain ATCC 27405 / DSM 1237 / JCM 9322 / NBRC 103400 / NCIMB 10682 / NRRL B-4536 / VPI 7372) (Clostridium thermocellum).